We begin with the raw amino-acid sequence, 230 residues long: Large ribosomal subunit protein uL1c (230 aa).

Belongs to the universal ribosomal protein uL1 family. As to quaternary structure, part of the 50S ribosomal subunit.

Its subcellular location is the plastid. It localises to the chloroplast. Functionally, binds directly to 23S rRNA. Might be involved in E site tRNA release (Potential). The sequence is that of Large ribosomal subunit protein uL1c (rpl1) from Thalassiosira pseudonana (Marine diatom).